A 137-amino-acid chain; its full sequence is Small ribosomal subunit protein bS6 (137 aa).

The tract at residues S104–A137 is disordered. Residues N111–A137 are compositionally biased toward basic and acidic residues.

It belongs to the bacterial ribosomal protein bS6 family.

Its function is as follows. Binds together with bS18 to 16S ribosomal RNA. The chain is Small ribosomal subunit protein bS6 from Helicobacter hepaticus (strain ATCC 51449 / 3B1).